We begin with the raw amino-acid sequence, 103 residues long: Integration host factor subunit alpha (103 aa).

The tract at residues 55–74 (CREKPQRPGRNPKTGEEMPI) is disordered.

It belongs to the bacterial histone-like protein family. In terms of assembly, heterodimer of an alpha and a beta chain.

Functionally, this protein is one of the two subunits of integration host factor, a specific DNA-binding protein that functions in genetic recombination as well as in transcriptional and translational control. This Thiobacillus denitrificans (strain ATCC 25259 / T1) protein is Integration host factor subunit alpha.